The primary structure comprises 143 residues: Transcriptional regulator MraZ (143 aa).

SpoVT-AbrB domains are found at residues 5–47 (EFLH…PMDE) and 76–119 (AIEC…ANDA).

The protein belongs to the MraZ family. As to quaternary structure, forms oligomers.

Its subcellular location is the cytoplasm. It localises to the nucleoid. In Oceanobacillus iheyensis (strain DSM 14371 / CIP 107618 / JCM 11309 / KCTC 3954 / HTE831), this protein is Transcriptional regulator MraZ.